Reading from the N-terminus, the 317-residue chain is MVTVVDKVTSMRVRHPEKAHRPDTSIQKKPDWIRVKAPTSQVYKETHGIVRANKLVTVCEEAGCPNVGECWSQRHASFMILGEICTRACAFCNVATGIPLAVDDDEPERVADAVAQMGLKHVVITSVDRDDLADGGAQHFAKVIYAIRRKSLGTTIEVLTPDFRHKDHALEIVVAAKPDVFNHNLETVPSKYLKVRPGARYFHSIRLLQRVKEIDPMIFTKSGIMVGFGEERNEILQLMDDLRSADVDFMTIGQYLQPTRKHHPVIRFLPPDEFESFAKIGKAKGFLHMASSPLTRSSHHAGDDFEILKKARAQKFS.

Positions 59, 64, 70, 85, 89, 92, and 298 each coordinate [4Fe-4S] cluster. Positions 71–287 constitute a Radical SAM core domain; it reads WSQRHASFMI…AKIGKAKGFL (217 aa).

Belongs to the radical SAM superfamily. Lipoyl synthase family. It depends on [4Fe-4S] cluster as a cofactor.

The protein localises to the cytoplasm. The enzyme catalyses [[Fe-S] cluster scaffold protein carrying a second [4Fe-4S](2+) cluster] + N(6)-octanoyl-L-lysyl-[protein] + 2 oxidized [2Fe-2S]-[ferredoxin] + 2 S-adenosyl-L-methionine + 4 H(+) = [[Fe-S] cluster scaffold protein] + N(6)-[(R)-dihydrolipoyl]-L-lysyl-[protein] + 4 Fe(3+) + 2 hydrogen sulfide + 2 5'-deoxyadenosine + 2 L-methionine + 2 reduced [2Fe-2S]-[ferredoxin]. The protein operates within protein modification; protein lipoylation via endogenous pathway; protein N(6)-(lipoyl)lysine from octanoyl-[acyl-carrier-protein]: step 2/2. Functionally, catalyzes the radical-mediated insertion of two sulfur atoms into the C-6 and C-8 positions of the octanoyl moiety bound to the lipoyl domains of lipoate-dependent enzymes, thereby converting the octanoylated domains into lipoylated derivatives. The chain is Lipoyl synthase from Bartonella bacilliformis (strain ATCC 35685 / KC583 / Herrer 020/F12,63).